The primary structure comprises 254 residues: UstYa family oxidase phomYc' (254 aa).

Residues 38–58 form a helical membrane-spanning segment; it reads LVLVLQSVLIISLLASLHILG. An N-linked (GlcNAc...) asparagine glycan is attached at N64. An HXXHC 1 motif is present at residues 138-142; sequence HQLHC. N159 carries N-linked (GlcNAc...) asparagine glycosylation. The short motif at 173–177 is the HXXHC 2 element; the sequence is HIDHC.

The protein belongs to the ustYa family.

Its subcellular location is the membrane. The protein operates within mycotoxin biosynthesis. Functionally, ustYa family oxidase; part of the gene cluster that mediates the biosynthesis of the phomopsins, a group of hexapeptide mycotoxins which infects lupins and causes lupinosis disease in livestock. Within the pathway, phomYc' catalyzes the desaturation of the Ile moiety into 2,3-dehydroisoleucine (dIle). The pathway starts with the processing of the precursor phomA' by several endopeptidases including kexin proteases as well as the cluster-specific S41 family peptidase phomP1 and the oligopeptidase phomG' to produce 10 identical copies of the hexapeptide Tyr-Val-Ile-Pro-Ile-Asp. After being excised from the precursor peptide, the core peptides are cyclized and modified post-translationally by enzymes encoded within the gene cluster. The timing and order of proteolysis of the phomA' precursor and PTMs are still unknown. Two tyrosinase-like enzymes, phomQ1' and phomQ2, catalyze the chlorination and hydroxylation of Tyr, respectively. PhomYb, is proposed to be involved in the construction of the macrocyclic structure. The other 4 ustYa family proteins may be involved in PTMs that generate the unique structure of phomopsin A. PhomYa' is required for the hydroxylation of C-beta of Tyr. PhomYc', phomYd', and phomYe are responsible for the biosynthesis of 2,3-dehydroisoleucine (dIle), 2,3-dehydroaspartic acid (dAsp), and 3,4-dehydroproline (dPro), respectively. While dIle formation by phomYc' is indispensable for the installation of dAsp by phomYd', the order of the other PTMs have not been elucidated yet. Most of the biosynthetic enzymes likely have broad substrate specificity, and thus, there might be a metabolic grid from a precursor to phomopsin A. The enzyme(s) responsible for the biosynthesis of 3,4-dehydrovaline (dVal) have also not been identified yet. Finally, phomM' acts as an S-adenosylmethionine-dependent alpha-N-methyltransferase that catalyzes two successive N-methylation reactions, converting N-desmethyl-phomopsin A to phomopsin A and phomopsin A further to an N,N-dimethylated congener called phomopsin E. In Diaporthe leptostromiformis (Lupinosis disease fungus), this protein is UstYa family oxidase phomYc'.